We begin with the raw amino-acid sequence, 75 residues long: Guanine nucleotide-binding protein G(I)/G(S)/G(O) subunit gamma-3 (75 aa).

A Phosphothreonine modification is found at Thr-5. Ser-9 is subject to Phosphoserine. Thr-10 is modified (phosphothreonine). At Ser-12 the chain carries Phosphoserine. Cys-72 carries the post-translational modification Cysteine methyl ester. The S-geranylgeranyl cysteine moiety is linked to residue Cys-72. Positions 73–75 (ALL) are cleaved as a propeptide — removed in mature form.

Belongs to the G protein gamma family. In terms of assembly, g proteins are composed of 3 units, alpha, beta and gamma. Forms a complex with GNAO1 and GNB1. Interacts with SCN8A. As to expression, abundantly expressed in brain. Low levels in testis.

It is found in the cell membrane. In terms of biological role, guanine nucleotide-binding proteins (G proteins) are involved as a modulator or transducer in various transmembrane signaling systems. The beta and gamma chains are required for the GTPase activity, for replacement of GDP by GTP, and for G protein-effector interaction. This is Guanine nucleotide-binding protein G(I)/G(S)/G(O) subunit gamma-3 (GNG3) from Bos taurus (Bovine).